A 227-amino-acid chain; its full sequence is Homeobox protein HD-10 (227 aa).

A DNA-binding region (homeobox) is located at residues 30–89; it reads FVKHRKRTTKAQLKVLEETFETNIRPDANMRKKLGEQLGMTPRSVQVWFQNRRAKIKKLT. Residues 88–115 are disordered; it reads LTQKKMMQQENTDNTKGPDAAHGSSSPK. The segment covering 92 to 102 has biased composition (polar residues); sequence KMMQQENTDNT.

The protein localises to the nucleus. The polypeptide is Homeobox protein HD-10 (HD-10) (Encephalitozoon cuniculi (strain GB-M1) (Microsporidian parasite)).